The sequence spans 286 residues: VDRYNELMMNYSDETADEGAKLQDMIDSQNLWDLENQVEMAMDALRCPPGDSAVTGLSGGERRRVALCKLLLSQPDLLLLDEPTNHLDAETIAWLEKHLRDYPGAVMMITHDRYFLDNVTGWILELDRGRGIPYEGNYSAYLQAKAKRMQQEAREDASRQKAISREQEWIASSPKARQTKSKARIRRYDELVEAAENRRPGDAQIVIPVAERLGRVVIEAENLTKSYGDRVLIENLTFKLPPGGIVGVIGPNGAGKTTLFRMITGQEQPDSGSVTVGETVHLGYVD.

The ABC transporter domain occupies 21–85 (KLQDMIDSQN…DLLLLDEPTN (65 aa)).

Belongs to the ABC transporter superfamily.

Functionally, the induction of virG by growth under acidic conditions and by phosphate starvation, in the absence of plant inducers, is influenced by ChvD. This is ATP-binding protein ChvD (chvD) from Rhizobium radiobacter (Agrobacterium tumefaciens).